A 494-amino-acid chain; its full sequence is UPF0371 protein M6_Spy1067 (494 aa).

The protein belongs to the UPF0371 family.

This is UPF0371 protein M6_Spy1067 from Streptococcus pyogenes serotype M6 (strain ATCC BAA-946 / MGAS10394).